Here is a 234-residue protein sequence, read N- to C-terminus: Orotidine 5'-phosphate decarboxylase (234 aa).

Residues D14, K36, 63–72 (DMKLLDIDNT), T118, R179, Q188, G208, and R209 contribute to the substrate site. K65 functions as the Proton donor in the catalytic mechanism.

The protein belongs to the OMP decarboxylase family. Type 1 subfamily. In terms of assembly, homodimer.

The enzyme catalyses orotidine 5'-phosphate + H(+) = UMP + CO2. The protein operates within pyrimidine metabolism; UMP biosynthesis via de novo pathway; UMP from orotate: step 2/2. In terms of biological role, catalyzes the decarboxylation of orotidine 5'-monophosphate (OMP) to uridine 5'-monophosphate (UMP). This chain is Orotidine 5'-phosphate decarboxylase, found in Rhizobium meliloti (strain 1021) (Ensifer meliloti).